Reading from the N-terminus, the 546-residue chain is Chaperonin GroEL 2 (546 aa).

ATP contacts are provided by residues 30–33, Lys-51, 87–91, Gly-415, and Asp-496; these read TLGP and DGTTT.

It belongs to the chaperonin (HSP60) family. In terms of assembly, forms a cylinder of 14 subunits composed of two heptameric rings stacked back-to-back. Interacts with the co-chaperonin GroES.

The protein resides in the cytoplasm. The enzyme catalyses ATP + H2O + a folded polypeptide = ADP + phosphate + an unfolded polypeptide.. Its function is as follows. Together with its co-chaperonin GroES, plays an essential role in assisting protein folding. The GroEL-GroES system forms a nano-cage that allows encapsulation of the non-native substrate proteins and provides a physical environment optimized to promote and accelerate protein folding. In Bradyrhizobium sp. (strain ORS 278), this protein is Chaperonin GroEL 2.